We begin with the raw amino-acid sequence, 545 residues long: E3 ubiquitin-protein ligase ipaH9.8 (545 aa).

Residues M1 to M242 are interaction with target proteins. LRR repeat units lie at residues N57–A77, Q78–L99, K100–P117, A118–L139, L140–Q157, A158–N179, V182–L203, and N205–T228. The segment at S243–L250 is linker. The tract at residues H251–S545 is E3 ubiquitin-protein ligase catalytic domain. An NEL domain is found at P253 to S545. C337 (glycyl thioester intermediate) is an active-site residue.

The protein belongs to the LRR-containing bacterial E3 ligase family. In terms of assembly, also interacts with human and mouse U2AF1 (U2AF35). In terms of processing, autoubiquitinated (in vitro). Ubiquitinated in the presence of host E1 ubiquitin-activating enzyme, E2 ubiquitin-conjugating enzyme and ubiquitin.

It is found in the secreted. It localises to the host cytoplasm. The protein localises to the host nucleus. It carries out the reaction S-ubiquitinyl-[E2 ubiquitin-conjugating enzyme]-L-cysteine + [acceptor protein]-L-lysine = [E2 ubiquitin-conjugating enzyme]-L-cysteine + N(6)-ubiquitinyl-[acceptor protein]-L-lysine.. Its pathway is protein modification; protein ubiquitination. With respect to regulation, exists in an autoinhibited state in the absence of substrate protein, due to interactions of the leucine-rich repeats with NEL domain. Is activated upon binding to a substrate protein. Functionally, effector E3 ubiquitin ligase that interferes with host's ubiquitination pathway and modulates the acute inflammatory responses, thus facilitating bacterial colonization within the host cell. Interacts with IKBKG (NEMO) and TNIP1 (ABIN-1), a ubiquitin-binding adapter protein, which results in TNIP1-dependent 'Lys-27'-linked polyubiquitination of IKBKG. Consequently, polyubiquitinated IKBKG undergoes proteasome-dependent degradation, which perturbs NF-kappa-B activation during bacterial infection. Mediates polyubiquitination of host U2AF1, leading to its proteasomal degradation. Catalyzes 'Lys-48'-linked polyubiquitination and subsequent degradation of a subset of host guanylate-binding proteins (GBP1, GBP2, GBP4 and GBP6), thereby suppressing host cell defense. In contrast, host GBP3 and GBP7 are not ubiquitinated by IpaH9.8. Uses UBE2D2 (UBCH5B) as an E2 ubiquitin-conjugating enzyme. In Shigella flexneri, this protein is E3 ubiquitin-protein ligase ipaH9.8.